The sequence spans 430 residues: Nucleoporin NUP42 (430 aa).

The interval 1–68 (MSAFGNPFTS…AFGMPQFGTN (68 aa)) is disordered. Residues 2–5 (SAFG) form an SXFG 1 repeat. Over residues 15 to 36 (NLSNTSGINPFTNNAASTNNMG) the composition is skewed to polar residues. SAFGXPXFG repeat units lie at residues 38-46 (SAFGRPSFG) and 58-66 (SAFGMPQFG). A compositionally biased stretch (low complexity) spans 45 to 68 (FGTANTMTGGTTTSAFGMPQFGTN). An SXFG 2 repeat occupies 78-81 (SAFG). SAFGXPXFG repeat units lie at residues 90–98 (SAFGAPAFG) and 112–120 (SAFGAPSFG). Residues 121–230 (STGFGAMAAT…QNTSTSSGTG (110 aa)) are interactions with CRM1 and GFD1. FG repeat units lie at residues 124–125 (FG) and 134–135 (FG). Ser-137 is subject to Phosphoserine. The SAFGXPXFG 5 repeat unit spans residues 143–151 (SAFGQPAFG). 2 SXFG repeats span residues 168–171 (SAFG) and 182–185 (SPFG). The disordered stretch occupies residues 180 to 294 (TTSPFGSLQQ…QSPFSGGSGG (115 aa)). A compositionally biased stretch (low complexity) spans 186 to 201 (SLQQNASQNASSTSSA). The stretch at 200–208 (SAFGKPTFG) is one SAFGXPXFG 6 repeat. The span at 209 to 230 (AATNTQSPFGTIQNTSTSSGTG) shows a compositional bias: polar residues. SXFG repeat units lie at residues 215–218 (SPFG) and 232–235 (SPFG). 2 stretches are compositionally biased toward polar residues: residues 237-252 (FGTN…NLQS) and 260-285 (PFGT…TNNQ). SXFG repeat units follow at residues 259 to 262 (SPFG) and 277 to 280 (SAFG). One copy of the FG 3 repeat lies at 296–297 (FG). Ser-298 carries the phosphoserine modification. The SXFG 9 repeat unit spans residues 312–315 (SSFG). FG repeat units follow at residues 319–322 (FSFG), 339–340 (FG), and 361–364 (FGFG). Residues 319–346 (FSFGITPQNDANKVSQSNPSFGQTMPNT) form a disordered region. Residues 323 to 346 (ITPQNDANKVSQSNPSFGQTMPNT) are compositionally biased toward polar residues. An interaction with GLE1 region spans residues 365–430 (QQQMNATNVN…DIPPPPALVA (66 aa)).

In terms of assembly, component of the nuclear pore complex (NPC). NPC constitutes the exclusive means of nucleocytoplasmic transport. NPCs allow the passive diffusion of ions and small molecules and the active, nuclear transport receptor-mediated bidirectional transport of macromolecules such as proteins, RNAs, ribonucleoparticles (RNPs), and ribosomal subunits across the nuclear envelope. Due to its 8-fold rotational symmetry, all subunits are present with 8 copies or multiples thereof. NUP42 interacts with the NUP82 subcomplex. It interacts directly with GLE1, and through its FG repeats with GFD1, the heterodimeric mRNA transport factor MEX67/MTR2, and the karyopherin CRM1.

The protein resides in the nucleus. The protein localises to the nuclear pore complex. Its subcellular location is the nucleus membrane. Functionally, functions as a component of the nuclear pore complex (NPC). NPC components, collectively referred to as nucleoporins (NUPs), can play the role of both NPC structural components and of docking or interaction partners for transiently associated nuclear transport factors. Active directional transport is assured by both, a Phe-Gly (FG) repeat affinity gradient for these transport factors across the NPC and a transport cofactor concentration gradient across the nuclear envelope (GSP1 and GSP2 GTPases associated predominantly with GTP in the nucleus, with GDP in the cytoplasm). NUP42 is specifically important for nuclear protein and mRNA export. This is Nucleoporin NUP42 (NUP42) from Saccharomyces cerevisiae (strain ATCC 204508 / S288c) (Baker's yeast).